Reading from the N-terminus, the 137-residue chain is Transcription antitermination protein NusB (137 aa).

The protein belongs to the NusB family.

Functionally, involved in transcription antitermination. Required for transcription of ribosomal RNA (rRNA) genes. Binds specifically to the boxA antiterminator sequence of the ribosomal RNA (rrn) operons. This chain is Transcription antitermination protein NusB, found in Haemophilus ducreyi (strain 35000HP / ATCC 700724).